The primary structure comprises 381 residues: Fe-S cluster assembly protein DRE2 (381 aa).

The segment at 8–165 (AQGSGRFLLL…KPDFGAQQAV (158 aa)) is N-terminal SAM-like domain. The tract at residues 100–134 (RNRDNQIWGSGSDSAAGLGSSDGDGGGGEKMSSSE) is disordered. The segment covering 108–118 (GSGSDSAAGLG) has biased composition (low complexity). Gly residues predominate over residues 119–128 (SSDGDGGGGE). The segment at 166–273 (PLKLGRKKNL…EEELLGEYDM (108 aa)) is linker. Residues cysteine 283, cysteine 294, cysteine 297, and cysteine 299 each contribute to the [2Fe-2S] cluster site. The segment at 283-299 (CRPKAGKRRRACKDCTC) is fe-S binding site A. Residues cysteine 344, cysteine 347, cysteine 355, and cysteine 358 each contribute to the [4Fe-4S] cluster site. 2 short sequence motifs (cx2C motif) span residues 344 to 347 (CGNC) and 355 to 358 (CDGC). The segment at 344-358 (CGNCALGDAFRCDGC) is fe-S binding site B.

It belongs to the anamorsin family. In terms of assembly, monomer. Interacts with TAH18. Interacts with MIA40. [2Fe-2S] cluster serves as cofactor. It depends on [4Fe-4S] cluster as a cofactor.

The protein resides in the cytoplasm. It localises to the mitochondrion intermembrane space. Functionally, component of the cytosolic iron-sulfur (Fe-S) protein assembly (CIA) machinery required for the maturation of extramitochondrial Fe-S proteins. Part of an electron transfer chain functioning in an early step of cytosolic Fe-S biogenesis, facilitating the de novo assembly of a [4Fe-4S] cluster on the scaffold complex CFD1-NBP35. Electrons are transferred to DRE2 from NADPH via the FAD- and FMN-containing protein TAH18. TAH18-DRE2 are also required for the assembly of the diferric tyrosyl radical cofactor of ribonucleotide reductase (RNR), probably by providing electrons for reduction during radical cofactor maturation in the catalytic small subunit RNR2. This is Fe-S cluster assembly protein DRE2 from Paracoccidioides brasiliensis (strain Pb18).